The chain runs to 135 residues: Large ribosomal subunit protein uL16c (135 aa).

The protein belongs to the universal ribosomal protein uL16 family. As to quaternary structure, part of the 50S ribosomal subunit.

It localises to the plastid. The protein localises to the chloroplast. This is Large ribosomal subunit protein uL16c from Ceratophyllum demersum (Rigid hornwort).